Consider the following 552-residue polypeptide: Probable beta-glucosidase btgE (552 aa).

Positions 1 to 18 (MRGAILATAAALAGTAMA) are cleaved as a signal peptide. The interval 250 to 291 (EPTSAPAAPSTTAVPATTTAAVPSTSSAAPSSSSTAPASTGA) is disordered. Positions 251–289 (PTSAPAAPSTTAVPATTTAAVPSTSSAAPSSSSTAPAST) are enriched in low complexity. E392 (proton donor) is an active-site residue. E488 (nucleophile) is an active-site residue.

It belongs to the glycosyl hydrolase 17 family.

It localises to the secreted. The protein localises to the cell wall. The enzyme catalyses Hydrolysis of terminal, non-reducing beta-D-glucosyl residues with release of beta-D-glucose.. It functions in the pathway glycan metabolism; cellulose degradation. In terms of biological role, beta-glucosidases are one of a number of cellulolytic enzymes involved in the degradation of cellulosic biomass. Catalyzes the last step releasing glucose from the inhibitory cellobiose. The protein is Probable beta-glucosidase btgE (btgE) of Neosartorya fischeri (strain ATCC 1020 / DSM 3700 / CBS 544.65 / FGSC A1164 / JCM 1740 / NRRL 181 / WB 181) (Aspergillus fischerianus).